Here is a 180-residue protein sequence, read N- to C-terminus: ATP-dependent protease subunit HslV (180 aa).

The active site involves threonine 5. Na(+) contacts are provided by glycine 161, cysteine 164, and threonine 167.

Belongs to the peptidase T1B family. HslV subfamily. A double ring-shaped homohexamer of HslV is capped on each side by a ring-shaped HslU homohexamer. The assembly of the HslU/HslV complex is dependent on binding of ATP.

The protein localises to the cytoplasm. It carries out the reaction ATP-dependent cleavage of peptide bonds with broad specificity.. With respect to regulation, allosterically activated by HslU binding. In terms of biological role, protease subunit of a proteasome-like degradation complex believed to be a general protein degrading machinery. This Campylobacter curvus (strain 525.92) protein is ATP-dependent protease subunit HslV.